The following is a 335-amino-acid chain: BTB and MATH domain-containing protein 39 (335 aa).

Positions 14-141 (MKTLCFKIMN…NGVFTIEFDL (128 aa)) constitute an MATH domain. Residues 161–226 (ADGKLIVEDQ…LQLDEFKVNV (66 aa)) enclose the BTB domain.

This chain is BTB and MATH domain-containing protein 39, found in Caenorhabditis briggsae.